Here is a 397-residue protein sequence, read N- to C-terminus: F-box protein At3g28330 (397 aa).

The region spanning 6 to 56 (KKDMDFLTEDLWEIILARLPLKSIITTPKLVCKVWKSIIESRCFRDLFQSL) is the F-box domain.

This is F-box protein At3g28330 from Arabidopsis thaliana (Mouse-ear cress).